The chain runs to 261 residues: Urease accessory protein UreD (261 aa).

Belongs to the UreD family. In terms of assembly, ureD, UreF and UreG form a complex that acts as a GTP-hydrolysis-dependent molecular chaperone, activating the urease apoprotein by helping to assemble the nickel containing metallocenter of UreC. The UreE protein probably delivers the nickel.

Its subcellular location is the cytoplasm. Its function is as follows. Required for maturation of urease via the functional incorporation of the urease nickel metallocenter. The protein is Urease accessory protein UreD of Haemophilus influenzae (strain ATCC 51907 / DSM 11121 / KW20 / Rd).